The chain runs to 264 residues: Glutamate racemase (264 aa).

Substrate-binding positions include 10-11 and 42-43; these read DS and YG. The active-site Proton donor/acceptor is cysteine 73. Residue 74–75 coordinates substrate; the sequence is NT. The active-site Proton donor/acceptor is cysteine 181. Substrate is bound at residue 182-183; it reads TH.

Belongs to the aspartate/glutamate racemases family.

The catalysed reaction is L-glutamate = D-glutamate. It participates in cell wall biogenesis; peptidoglycan biosynthesis. Functionally, provides the (R)-glutamate required for cell wall biosynthesis. The chain is Glutamate racemase from Thermoanaerobacter sp. (strain X514).